The primary structure comprises 1833 residues: MIFQSFLLGNLVSLCMKIINSVVVVGLYYGFLTTFSIGPSYLFLLRAQVMEEGEEGTEKKVSGTTGFIMGQLMMFISIYYTPLHLALGRPHTITVLALPYLLFHFFWNNHKHFFDYGSTSRNSMRNLSIQCVFLNNLIFQLFNYFILPSSMLARLVNIYMFRCNNKMLFVTSSFVGWLIGHILFMKWVGLVLVWIQQNNSIRSNKYLVSELRNSMARIFSILFFITCVYYLGRMPSPIFTNKLKQMLETNEIEEETNLEIEKTSETKETKQEEEGFTEEDPSPSLFSEEKEDPDKIDETEKIRVNGKDKTKDEFHLKEACYKNSPTSYSGNQDISKLEILKKEKKILFWFQKPLIFLLFDYKRWNRPMRYIKNNRFENAVRNEMSQYFFYTCQNDGKQRISFTYPPSLSIFWEMIQRKISLATTEKFLYDDELYNYWIYTNEQKKNSLSNEFANRITVLDKGLFYIDVLDKKTRLCKSKNEYLQKDHDPLLNGSYRGIIKKTLLPFINNDETTVKKLIDEIFINKIHSVLGNCNNYQEFEYKKDPFKKNPISSKIRHFVTLMSQFDGESTFNQKGISLLSEHKQICSEDPEIFFKFLVDTIIADSFTQTIPKESIGIKEISKKVPHWSYQLIDESEQEEMENEKQVSWPHQIRSRSGKEVVFFTDKQENTDNPTPNTADISEQADEVVLTRYPQESDFRRDIIKGSMRSQRRKIVIWELFQANIHSPLFLDRTNKSSFFSITFSRLIKRIFKNYMGKNPELDISNYKEEELKKKEKAKEHKKDKEKKQEQIRLDIAETWDTIPGAQIIRSLILLTQSILRKYILLPLLITGKNIGRILLFQLPEWSDDFKEWTSEMHIKCTYNGVQLSEKEFPKNWLTDGMQIKILSPFCLKPWHKSMIRPYHQDKKKKEQNQIDAFCFLTVVGLETDIPFGPPRKRPSFFQPIFKQLDKKIEKLIKGNFQVRKRLKEKILFFLKLQNETNNWIIEIFPFFKKIIRKMSTVNTIGVFGLKEASSEIKSEKDSRIKNHMIHESSVQIRFLNQTNSSVTEKKMKDLANRTRIIKNKIEKISNDKLKMSPKKTRYGTKNLGQILKRRNARLIRNSNYILKFFRERIYGDIFLYIINIPKINTQLFLESTKNGIDKSIYNNESITKTNKNRIQFISTINKKFLPFLSTSKNNSKIISDFSFLSQAYVFYKLSQAKILNLYKLRLVLQYRGISLFLKNEIKDFFGTQGITNSELKTKKLPNSGMNQWKNWLKLKNNYQYNLSQLKWSRLVPQKWRNRVTEHCEVENTNLYQNEELINSKKHLLLLPDQKYNFQKNYRYDVLSYKFFNYKNKNDSYRYSYGLPFQVNKNQEFSYTYNYNINNNKFIDMWWNIPISNFSYLEKTKIMDIDKNIDRKYLDFKILDFSLRNKIDIEDWIDISTSINENTKTEPRNYQIVEKINKKSLVYSTIYQEIKQSDQKNKLFDWMGMNEKILSRPISNLEFWFFSEFFSFYNAYKMKPWVIPINLLFSNSNVSEKFSKNKSINRKKKTNPFIPSNEKKSFELENRNQDEKELVSKEDLGSYVQENYEKDIEEDYISFIDIKKPIKQKQPKSVIEAEFDLFLKRYLLFQLKWADSLNEKLMDNIQVYCLVLRLINPIEILISSIERKELSMDIMLDRKDFNCPNWKQKRVLIIEPIRLSIRGDGQFLLYQTIGISLVHKSKHQNNQKRYSENVDKKFLGERNKNNFDLLAPENLLSPRRRRELRILLCLNSRNNNGVNTNPMENRVKNCNQFFDEKKDLDRDKNTLRNLKFFLWPNYRLEDLACMNRFWFDTNNGSRFSILRIHMYPQF.

6 consecutive transmembrane segments (helical) span residues 18-38 (IINS…FSIG), 67-87 (FIMG…HLAL), 90-110 (PHTI…WNNH), 127-147 (LSIQ…YFIL), 175-195 (VGWL…LVWI), and 218-238 (IFSI…PSPI). The segment at 254–301 (EETNLEIEKTSETKETKQEEEGFTEEDPSPSLFSEEKEDPDKIDETEK) is disordered. 2 stretches are compositionally biased toward basic and acidic residues: residues 259–273 (EIEK…KQEE) and 292–301 (DPDKIDETEK).

It belongs to the TIC214 family. Part of the Tic complex.

It is found in the plastid. Its subcellular location is the chloroplast inner membrane. In terms of biological role, involved in protein precursor import into chloroplasts. May be part of an intermediate translocation complex acting as a protein-conducting channel at the inner envelope. This Spinacia oleracea (Spinach) protein is Protein TIC 214.